We begin with the raw amino-acid sequence, 228 residues long: ATP-dependent dethiobiotin synthetase BioD (228 aa).

13–18 lines the ATP pocket; that stretch reads DVGKTV. T17 provides a ligand contact to Mg(2+). Residue K38 is part of the active site. Residues D55, 116-119, 176-177, and 205-207 contribute to the ATP site; these read EGAG, NR, and PYI. Residues D55 and E116 each coordinate Mg(2+).

It belongs to the dethiobiotin synthetase family. Homodimer. Mg(2+) is required as a cofactor.

The protein resides in the cytoplasm. The enzyme catalyses (7R,8S)-7,8-diammoniononanoate + CO2 + ATP = (4R,5S)-dethiobiotin + ADP + phosphate + 3 H(+). Its pathway is cofactor biosynthesis; biotin biosynthesis; biotin from 7,8-diaminononanoate: step 1/2. In terms of biological role, catalyzes a mechanistically unusual reaction, the ATP-dependent insertion of CO2 between the N7 and N8 nitrogen atoms of 7,8-diaminopelargonic acid (DAPA, also called 7,8-diammoniononanoate) to form a ureido ring. This is ATP-dependent dethiobiotin synthetase BioD from Vibrio parahaemolyticus serotype O3:K6 (strain RIMD 2210633).